A 102-amino-acid chain; its full sequence is Nucleoid-associated protein WS1681 (102 aa).

This sequence belongs to the YbaB/EbfC family. As to quaternary structure, homodimer.

Its subcellular location is the cytoplasm. The protein resides in the nucleoid. Binds to DNA and alters its conformation. May be involved in regulation of gene expression, nucleoid organization and DNA protection. This chain is Nucleoid-associated protein WS1681, found in Wolinella succinogenes (strain ATCC 29543 / DSM 1740 / CCUG 13145 / JCM 31913 / LMG 7466 / NCTC 11488 / FDC 602W) (Vibrio succinogenes).